The chain runs to 205 residues: Probable GTP-binding protein EngB (205 aa).

The region spanning 22-194 (ELPEIAFAGR…WESILDLCEI (173 aa)) is the EngB-type G domain. Residues 30 to 37 (GRSNVGKS), 57 to 61 (GRTQL), 75 to 78 (DLPG), 142 to 145 (TKAD), and 173 to 175 (FSA) each bind GTP. 2 residues coordinate Mg(2+): serine 37 and threonine 59.

This sequence belongs to the TRAFAC class TrmE-Era-EngA-EngB-Septin-like GTPase superfamily. EngB GTPase family. Mg(2+) is required as a cofactor.

Its function is as follows. Necessary for normal cell division and for the maintenance of normal septation. This chain is Probable GTP-binding protein EngB, found in Desulfatibacillum aliphaticivorans.